Consider the following 568-residue polypeptide: MAEPDLLAPFADLPFPPGDDFPDFPTLGDDAFALEDFDLDDLDFDFDVDLFPPDAPPPVTTSSSSSAAGSPEAGTSSAGDGGSKNEESADSSSPSRSGSDGGGGKDGKDDEAKRRARLVRNRESAHQSRQRKKQYVEELEGKVKVMQATIADLTARISCVTAENAALKQQLGGAAGAGAAAPPPPMPMYPAVYPLPMPWIHPAYAMRGSQVPLVPIPRLKTQQPASTPEPPAKKARKTKKVAGVSLLGLLFLMMVCGCLVPAVNRMYGAAYTGEGAAIVPSHHGRILAVEGPQNSVSNGVDPKVPQNGSETLPALLYLPRNGKHVKINGNLVIKSIVASEKASSRLSNYGEKGSGNQGKEETSLAIPGYVAPLEAGEVMDSAKGMNELMALAPGDGSIYREDDGMLPQWFSEAMSGPMLNSGMCTEVFQFDLSPTTADANGIVPVYSGSVTNTSQNYTENLPSGPVQKVKNRRISYSEAIPLRGSTSNDTDHFKAPPKNHSQSHAGRKPVSSVVVSVLADPREASDRDGEGRISSNSLSRIFVVVLIDSVKYVTYSCVLPFKSHSPHL.

2 stretches are compositionally biased toward low complexity: residues 1 to 13 and 60 to 78; these read MAEPDLLAPFADL and TTSSSSSAAGSPEAGTSSA. 2 disordered regions span residues 1-29 and 45-134; these read MAEPDLLAPFADLPFPPGDDFPDFPTLGD and DFDV…RKKQ. The Cytoplasmic segment spans residues 1–240; that stretch reads MAEPDLLAPF…PAKKARKTKK (240 aa). The segment covering 103–113 has biased composition (basic and acidic residues); that stretch reads GGKDGKDDEAK. The region spanning 111–171 is the bZIP domain; that stretch reads EAKRRARLVR…AENAALKQQL (61 aa). The interval 113–144 is basic motif; it reads KRRARLVRNRESAHQSRQRKKQYVEELEGKVK. The segment at 150–157 is leucine-zipper; that stretch reads IADLTARI. A helical membrane pass occupies residues 241–261; it reads VAGVSLLGLLFLMMVCGCLVP. Topologically, residues 262–568 are lumenal; it reads AVNRMYGAAY…LPFKSHSPHL (307 aa). Residues N307, N452, N456, N488, and N499 are each glycosylated (N-linked (GlcNAc...) asparagine). Residues 479 to 510 are disordered; the sequence is AIPLRGSTSNDTDHFKAPPKNHSQSHAGRKPV.

This sequence belongs to the bZIP family.

The protein resides in the endoplasmic reticulum membrane. It is found in the nucleus. Functionally, transcription factor involved in endoplasmic reticulum (ER) stress response. Acts as a ER stress sensor and activates the transcription factor BZIP50 and the chaperone BIP1. The protein is bZIP transcription factor 60 of Oryza sativa subsp. japonica (Rice).